The chain runs to 522 residues: Target of rapamycin complex 2 subunit MAPKAP1 (522 aa).

Residue alanine 2 is modified to N-acetylalanine. The interaction with MAP3K2 stretch occupies residues 2-184; the sequence is AFLDNPTIIL…KKIDVYLPLH (183 aa). The interaction with NBN stretch occupies residues 2 to 267; the sequence is AFLDNPTIIL…GFSTLALVEK (266 aa). Residues 38–59 are disordered; it reads LEKTHPPSVPGDSGSEVQGSSG. Threonine 86 is modified (phosphothreonine). Residues serine 128, serine 186, serine 315, and serine 356 each carry the phosphoserine modification. In terms of domain architecture, CRIM spans 139-267; that stretch reads QSILSVRLEQ…GFSTLALVEK (129 aa). Residues 279–353 are SIN1-type RBD; it reads LFVRINAAHG…QNAWEFCLVR (75 aa). Positions 382 to 487 constitute an SIN1-type PH domain; the sequence is HYKSFKVSMI…IVLKVNYILE (106 aa). Arginine 393 contacts a 1,2-diacyl-sn-glycero-3-phospho-(1D-myo-inositol-3,4,5-trisphosphate). Threonine 398 bears the Phosphothreonine mark. A 1,2-diacyl-sn-glycero-3-phospho-(1D-myo-inositol-3,4,5-trisphosphate)-binding residues include lysine 428 and lysine 464. Residues 468 to 522 are interaction with ATF2; it reads FESDAATVSEIVLKVNYILESRASTARADYFAQKQRKLNRRTSFSFQKEKKSGQQ. Phosphoserine is present on serine 510.

The protein belongs to the SIN1 family. In terms of assembly, component of the mechanistic target of rapamycin complex 2 (mTORC2), consisting in two heterotretramers composed of MTOR, MLST8, RICTOR and MAPKAP1/SIN1. The mTORC2 core complex associates with PRR5/PROTOR1 and/or PRR5L/PROTOR2. Contrary to mTORC1, mTORC2 does not bind to and is not sensitive to FKBP12-rapamycin. Interacts with MAP3K2. Interacts with ATF2. Interacts with MAPK8. Interacts with GTP-bound HRAS and KRAS; inhibiting their activity. Interacts with IFNAR2. Post-translationally, phosphorylation at Ser-128 by PKC promotes relocalization to the perinuclear region, where the mTORC2 complex specifically mediates phosphorylation of SGK1. Phosphorylated at Thr-86 by AKT1 or RPS6KB1 in the presence of growth factors; the effect of this phosphorylation is however unclear. According to two studies, phosphorylation at Thr-86 by AKT1 is part of a positive feedback loop that increases mTORC2 activation. According to another study, phosphorylation at Thr-86 and Thr-398 by RPS6KB1 promotes dissociation from the mTORC2 complex, leading to inhibit mTORC2 signaling.

It localises to the cell membrane. The protein resides in the endoplasmic reticulum membrane. The protein localises to the early endosome membrane. It is found in the late endosome membrane. Its subcellular location is the lysosome membrane. It localises to the golgi apparatus membrane. The protein resides in the mitochondrion outer membrane. The protein localises to the cytoplasm. It is found in the perinuclear region. Its subcellular location is the nucleus. Its activity is regulated as follows. Phosphatidylinositol 3,4,5-trisphosphate (PI(3,4,5)P3) promotes MTOR activation by relieving MAPKAP1/SIN1-mediated inhibition of MTOR that takes place in absence of PI(3,4,5)P3. In terms of biological role, component of the mechanistic target of rapamycin complex 2 (mTORC2), which transduces signals from growth factors to pathways involved in proliferation, cytoskeletal organization, lipogenesis and anabolic output. In response to growth factors, mTORC2 phosphorylates and activates AGC protein kinase family members, including AKT (AKT1, AKT2 and AKT3), PKC (PRKCA, PRKCB and PRKCE) and SGK1. In contrast to mTORC1, mTORC2 is nutrient-insensitive. Within the mTORC2 complex, MAPKAP1/SIN1 acts as a substrate adapter which recognizes and binds AGC protein kinase family members for phosphorylation by MTOR. mTORC2 plays a critical role in AKT1 activation by mediating phosphorylation of different sites depending on the context, such as 'Thr-450', 'Ser-473', 'Ser-477' or 'Thr-479', facilitating the phosphorylation of the activation loop of AKT1 on 'Thr-308' by PDPK1/PDK1 which is a prerequisite for full activation. mTORC2 catalyzes the phosphorylation of SGK1 at 'Ser-422' and of PRKCA on 'Ser-657'. The mTORC2 complex also phosphorylates various proteins involved in insulin signaling, such as FBXW8 and IGF2BP1. mTORC2 acts upstream of Rho GTPases to regulate the actin cytoskeleton, probably by activating one or more Rho-type guanine nucleotide exchange factors. mTORC2 promotes the serum-induced formation of stress-fibers or F-actin. MAPKAP1 inhibits MAP3K2 by preventing its dimerization and autophosphorylation. Inhibits HRAS and KRAS independently of mTORC2 complex. Enhances osmotic stress-induced phosphorylation of ATF2 and ATF2-mediated transcription. Involved in ciliogenesis, regulates cilia length through its interaction with CCDC28B independently of mTORC2 complex. This is Target of rapamycin complex 2 subunit MAPKAP1 from Rattus norvegicus (Rat).